The chain runs to 599 residues: Vitamin B12-dependent ribonucleotide reductase (599 aa).

193-197 (PTGTI) provides a ligand contact to substrate. The tract at residues 519-555 (LAQSAPRQAGPAKAATTAPAAKAQEPAAAPSPKQAHN) is disordered. The span at 526–553 (QAGPAKAATTAPAAKAQEPAAAPSPKQA) shows a compositional bias: low complexity.

The protein belongs to the ribonucleoside diphosphate reductase class-2 family. It depends on adenosylcob(III)alamin as a cofactor.

The enzyme catalyses a 2'-deoxyribonucleoside 5'-diphosphate + [thioredoxin]-disulfide + H2O = a ribonucleoside 5'-diphosphate + [thioredoxin]-dithiol. Functionally, catalyzes the reduction of ribonucleotides to deoxyribonucleotides. May function to provide a pool of deoxyribonucleotide precursors for DNA repair during oxygen limitation and/or for immediate growth after restoration of oxygen. In Streptantibioticus cattleyicolor (Streptomyces cattleya), this protein is Vitamin B12-dependent ribonucleotide reductase (nrdJ).